A 406-amino-acid polypeptide reads, in one-letter code: Cysteine desulfurase (406 aa).

At Lys226 the chain carries N6-(pyridoxal phosphate)lysine. The active-site Cysteine persulfide intermediate is Cys364.

This sequence belongs to the class-V pyridoxal-phosphate-dependent aminotransferase family. Csd subfamily. In terms of assembly, homodimer. Interacts with SufE and the SufBCD complex composed of SufB, SufC and SufD. The interaction with SufE is required to mediate the direct transfer of the sulfur atom from the S-sulfanylcysteine. It depends on pyridoxal 5'-phosphate as a cofactor.

It localises to the cytoplasm. It catalyses the reaction (sulfur carrier)-H + L-cysteine = (sulfur carrier)-SH + L-alanine. The catalysed reaction is L-selenocysteine + AH2 = hydrogenselenide + L-alanine + A + H(+). Its pathway is cofactor biosynthesis; iron-sulfur cluster biosynthesis. Functionally, cysteine desulfurases mobilize the sulfur from L-cysteine to yield L-alanine, an essential step in sulfur metabolism for biosynthesis of a variety of sulfur-containing biomolecules. Component of the suf operon, which is activated and required under specific conditions such as oxidative stress and iron limitation. Acts as a potent selenocysteine lyase in vitro, that mobilizes selenium from L-selenocysteine. Selenocysteine lyase activity is however unsure in vivo. The sequence is that of Cysteine desulfurase from Escherichia fergusonii (strain ATCC 35469 / DSM 13698 / CCUG 18766 / IAM 14443 / JCM 21226 / LMG 7866 / NBRC 102419 / NCTC 12128 / CDC 0568-73).